The primary structure comprises 513 residues: Glucose-1-phosphate adenylyltransferase small subunit, chloroplastic/amyloplastic (513 aa).

A chloroplast-targeting transit peptide spans 1–64 (MAMAAAASPS…RRPFFFSPRA (64 aa)).

This sequence belongs to the bacterial/plant glucose-1-phosphate adenylyltransferase family. In terms of assembly, heterotetramer. Leaves and starchy endosperm.

The protein localises to the plastid. Its subcellular location is the chloroplast. It is found in the amyloplast. It catalyses the reaction alpha-D-glucose 1-phosphate + ATP + H(+) = ADP-alpha-D-glucose + diphosphate. The protein operates within glycan biosynthesis; starch biosynthesis. With respect to regulation, activated by 3'phosphoglycerate, inhibited by orthophosphate. Allosteric regulation. This protein plays a role in synthesis of starch. It catalyzes the synthesis of the activated glycosyl donor, ADP-glucose from Glc-1-P and ATP. The polypeptide is Glucose-1-phosphate adenylyltransferase small subunit, chloroplastic/amyloplastic (Hordeum vulgare (Barley)).